Reading from the N-terminus, the 384-residue chain is 8-amino-7-oxononanoate synthase (384 aa).

Arg21 lines the substrate pocket. 108 to 109 (GF) is a binding site for pyridoxal 5'-phosphate. A substrate-binding site is contributed by His133. The pyridoxal 5'-phosphate site is built by Ser179, His207, and Thr233. An N6-(pyridoxal phosphate)lysine modification is found at Lys236. Residue Thr352 participates in substrate binding.

It belongs to the class-II pyridoxal-phosphate-dependent aminotransferase family. BioF subfamily. Homodimer. It depends on pyridoxal 5'-phosphate as a cofactor.

It carries out the reaction 6-carboxyhexanoyl-[ACP] + L-alanine + H(+) = (8S)-8-amino-7-oxononanoate + holo-[ACP] + CO2. It functions in the pathway cofactor biosynthesis; biotin biosynthesis. Functionally, catalyzes the decarboxylative condensation of pimeloyl-[acyl-carrier protein] and L-alanine to produce 8-amino-7-oxononanoate (AON), [acyl-carrier protein], and carbon dioxide. The chain is 8-amino-7-oxononanoate synthase from Escherichia coli (strain K12 / DH10B).